The following is a 66-amino-acid chain: MPKLKTKSGAKKRFKVTATGKVMSAQRGKRHGMIKRTKKQIRQLRGTRVIFKTDGDNIKKYFLPNA.

The tract at residues 20–41 is disordered; the sequence is GKVMSAQRGKRHGMIKRTKKQI. Basic residues predominate over residues 27 to 41; it reads RGKRHGMIKRTKKQI.

This sequence belongs to the bacterial ribosomal protein bL35 family.

This chain is Large ribosomal subunit protein bL35, found in Rhodopseudomonas palustris (strain BisB5).